Reading from the N-terminus, the 427-residue chain is Histidine--tRNA ligase (427 aa).

The protein belongs to the class-II aminoacyl-tRNA synthetase family. As to quaternary structure, homodimer.

The protein localises to the cytoplasm. The catalysed reaction is tRNA(His) + L-histidine + ATP = L-histidyl-tRNA(His) + AMP + diphosphate + H(+). This Aster yellows witches'-broom phytoplasma (strain AYWB) protein is Histidine--tRNA ligase.